We begin with the raw amino-acid sequence, 177 residues long: T-cell receptor beta chain C region (177 aa).

Residues 1-150 (EDLANVSAPQ…GVLSATVLYE (150 aa)) are c region. Residues Asn-5 and Asn-22 are each glycosylated (N-linked (GlcNAc...) asparagine). The cysteines at positions 31 and 96 are disulfide-linked. The helical transmembrane segment at 146–168 (TVLYEILLGKATLYAVLVSALVL) threads the bilayer. Residues 169–177 (MAMVKRKDS) lie on the Cytoplasmic side of the membrane.

It is found in the membrane. The protein is T-cell receptor beta chain C region of Oryctolagus cuniculus (Rabbit).